The chain runs to 599 residues: UvrABC system protein C (599 aa).

In terms of domain architecture, GIY-YIG spans 18–96; sequence QLPGVYRMLG…IKQHRPPYNI (79 aa). The region spanning 207–242 is the UVR domain; that stretch reads KELNQELIAKMEEAAEQLAFEKAMFYRDRLGLLREV.

It belongs to the UvrC family. In terms of assembly, interacts with UvrB in an incision complex.

Its subcellular location is the cytoplasm. In terms of biological role, the UvrABC repair system catalyzes the recognition and processing of DNA lesions. UvrC both incises the 5' and 3' sides of the lesion. The N-terminal half is responsible for the 3' incision and the C-terminal half is responsible for the 5' incision. In Acinetobacter baylyi (strain ATCC 33305 / BD413 / ADP1), this protein is UvrABC system protein C.